We begin with the raw amino-acid sequence, 140 residues long: Profilin-2 (140 aa).

At alanine 2 the chain carries N-acetylalanine.

This sequence belongs to the profilin family. In terms of assembly, occurs in many kinds of cells as a complex with monomeric actin in a 1:1 ratio. Interacts with PFN2. As to quaternary structure, interacts with ACTMAP (via N-terminus); the interaction may facilitate efficient cleavage of the acetylated N-terminus of immature actin by ACTMAP. In terms of tissue distribution, highly expressed in brain, skeletal muscle and kidney and less strongly in heart, placenta, lung and liver.

It localises to the cytoplasm. The protein resides in the cytoskeleton. Functionally, binds to actin and affects the structure of the cytoskeleton. At high concentrations, profilin prevents the polymerization of actin, whereas it enhances it at low concentrations. By binding to PIP2, it inhibits the formation of IP3 and DG. The sequence is that of Profilin-2 (PFN2) from Homo sapiens (Human).